Consider the following 74-residue polypeptide: DNA-directed RNA polymerase subunit omega (74 aa).

This sequence belongs to the RNA polymerase subunit omega family. In terms of assembly, the RNAP catalytic core consists of 2 alpha, 1 beta, 1 beta' and 1 omega subunit. When a sigma factor is associated with the core the holoenzyme is formed, which can initiate transcription.

The catalysed reaction is RNA(n) + a ribonucleoside 5'-triphosphate = RNA(n+1) + diphosphate. Its function is as follows. Promotes RNA polymerase assembly. Latches the N- and C-terminal regions of the beta' subunit thereby facilitating its interaction with the beta and alpha subunits. This chain is DNA-directed RNA polymerase subunit omega, found in Hydrogenovibrio crunogenus (strain DSM 25203 / XCL-2) (Thiomicrospira crunogena).